Here is a 334-residue protein sequence, read N- to C-terminus: Phosphate acyltransferase (334 aa).

It belongs to the PlsX family. As to quaternary structure, homodimer. Probably interacts with PlsY.

It is found in the cytoplasm. It catalyses the reaction a fatty acyl-[ACP] + phosphate = an acyl phosphate + holo-[ACP]. It participates in lipid metabolism; phospholipid metabolism. In terms of biological role, catalyzes the reversible formation of acyl-phosphate (acyl-PO(4)) from acyl-[acyl-carrier-protein] (acyl-ACP). This enzyme utilizes acyl-ACP as fatty acyl donor, but not acyl-CoA. This Mycoplasma capricolum subsp. capricolum (strain California kid / ATCC 27343 / NCTC 10154) protein is Phosphate acyltransferase.